Reading from the N-terminus, the 1012-residue chain is Multiple C2 domain and transmembrane region protein 10 (1012 aa).

In terms of domain architecture, C2 1 spans 1–115 (MTEAKTGTGN…REGESVVQLY (115 aa)). The segment at 141–203 (ENGENVRRVN…SQQNGQGQRM (63 aa)) is disordered. The span at 148 to 160 (RVNRSGGSKKSKK) shows a compositional bias: basic residues. Low complexity-rich tracts occupy residues 161 to 180 (VQNV…QQQQ) and 188 to 202 (RGNQ…QGQR). 3 C2 domains span residues 262-376 (SSHK…PQWY), 411-551 (KAGN…SRWF), and 585-710 (YNSD…THSY). Positions 296, 344, 346, and 349 each coordinate Ca(2+). 3 consecutive transmembrane segments (helical) span residues 810–830 (FFRL…VEVM), 841–861 (VFVL…PCLL), and 952–972 (ATFL…TVPV).

The protein belongs to the MCTP family. It depends on Ca(2+) as a cofactor. As to expression, highly expressed in roots meristems, shoot apical meristems (SAMs) and in incipient leaf primordia. Observed in flowers.

The protein localises to the endoplasmic reticulum membrane. Its function is as follows. May function as a signaling molecule by regulating the trafficking of other regulators. This is Multiple C2 domain and transmembrane region protein 10 from Arabidopsis thaliana (Mouse-ear cress).